Reading from the N-terminus, the 675-residue chain is Potassium-transporting ATPase ATP-binding subunit (675 aa).

Helical transmembrane passes span 34 to 54 (IMFVVEVGMILTLILICFPDI), 65 to 85 (LITIFIILLITILFANFSEAF), 216 to 236 (IALFTLLTTLTIIFLVVIVTL), and 245 to 265 (LILPIAMLIALTVCLIPTTIG). The active-site 4-aspartylphosphate intermediate is Asp304. Residues Asp341, Glu345, 372–379 (FTAETRMS), and Lys390 contribute to the ATP site. Residues Asp513 and Asp517 each contribute to the Mg(2+) site. The next 3 helical transmembrane spans lie at 569 to 591 (ALTTFSLANDVAKYFAILPALMM), 611 to 631 (AIISALIFNALIIVALIPIAM), and 644 to 664 (IFINNMLIYGLGGLIVPFLGI).

This sequence belongs to the cation transport ATPase (P-type) (TC 3.A.3) family. Type IA subfamily. As to quaternary structure, the system is composed of three essential subunits: KdpA, KdpB and KdpC.

The protein localises to the cell membrane. It carries out the reaction K(+)(out) + ATP + H2O = K(+)(in) + ADP + phosphate + H(+). Part of the high-affinity ATP-driven potassium transport (or Kdp) system, which catalyzes the hydrolysis of ATP coupled with the electrogenic transport of potassium into the cytoplasm. This subunit is responsible for energy coupling to the transport system and for the release of the potassium ions to the cytoplasm. In Staphylococcus aureus (strain bovine RF122 / ET3-1), this protein is Potassium-transporting ATPase ATP-binding subunit.